The primary structure comprises 21 residues: Antimicrobial peptide scolopin-1 (21 aa).

As to expression, expressed by the venom gland.

Its subcellular location is the secreted. In terms of biological role, antimicrobial peptide against both Gram-positive, -negative and yeast. Also induces histamine release by mast cells and shows moderate hemolytic activities against both human and rabbit red cells. The chain is Antimicrobial peptide scolopin-1 from Scolopendra mutilans (Chinese red-headed centipede).